The chain runs to 205 residues: MTVQERWVELADIKDELAARDWFPGTSGNLAIRVSDDPLTFLVTASGRDKRKRTNEDFVLVDATGQLIGEQSGKPSAETLLHVEIFNNTNATCSLHVHTVDNNVISELYAAQGHVTFTGQEIIKALGYWEETASVRIPIIENHADIPTLARAFAPHVTGDAGAVLIRNHGITVWGETPAAAKRYLEAYEFLFSYSLKLRALGVHS.

Residues His96 and His98 each contribute to the Zn(2+) site.

Belongs to the aldolase class II family. MtnB subfamily. Zn(2+) serves as cofactor.

It catalyses the reaction 5-(methylsulfanyl)-D-ribulose 1-phosphate = 5-methylsulfanyl-2,3-dioxopentyl phosphate + H2O. The protein operates within amino-acid biosynthesis; L-methionine biosynthesis via salvage pathway; L-methionine from S-methyl-5-thio-alpha-D-ribose 1-phosphate: step 2/6. In terms of biological role, catalyzes the dehydration of methylthioribulose-1-phosphate (MTRu-1-P) into 2,3-diketo-5-methylthiopentyl-1-phosphate (DK-MTP-1-P). The protein is Methylthioribulose-1-phosphate dehydratase of Exiguobacterium sp. (strain ATCC BAA-1283 / AT1b).